Here is a 326-residue protein sequence, read N- to C-terminus: mRNA decay activator protein ZFP36 (326 aa).

The tract at residues 1–15 (MDLTAIYESLLSLSP) is necessary for nuclear export. Residues 1 to 100 (MDLTAIYESL…PTSPTATSTT (100 aa)) form a necessary and sufficient for the association with mRNA decay enzymes and mRNA decay activation region. 2 necessary for localization of ARE-containing mRNAs to processing bodies (PBs) regions span residues 1 to 174 (MDLT…DLAA) and 100 to 326 (TPSR…SVSE). Positions 13–66 (LSPDVPVPSDHGGTESSPGWGSSGPWSLSPSDSSPSGVTSRLPGRSTSLVEGRS) are disordered. Positions 28-49 (SSPGWGSSGPWSLSPSDSSPSG) are enriched in low complexity. Ser60 bears the Phosphoserine; by MAPKAPK2 mark. At Ser66 the chain carries Phosphoserine. The P-P-P-P-G repeat unit spans residues 71–75 (PPPPG). Residues 78 to 102 (PLAPRLGPELSPSPTSPTATSTTPS) are disordered. Ser88 and Ser90 each carry phosphoserine. Residue Thr92 is modified to Phosphothreonine. Phosphoserine is present on Ser93. The tract at residues 95–168 (TATSTTPSRY…GSRCHFIHNP (74 aa)) is necessary for nuclear localization. Positions 97 to 173 (TSTTPSRYKT…FIHNPSEDLA (77 aa)) are necessary for RNA-binding. 2 C3H1-type zinc fingers span residues 103 to 131 (RYKTELCRTFSESGRCRYGAKCQFAHGLG) and 141 to 169 (KYKTELCHKFYLQGRCPYGSRCHFIHNPS). Residues 103-194 (RYKTELCRTF…ISFSGLPSGR (92 aa)) form a necessary for interaction with PABPN1 region. Residue Ser169 is modified to Phosphoserine. Residues 174–326 (APGHPPVLRQ…PIFNRISVSE (153 aa)) form a necessary for mRNA decay activation region. 2 disordered regions span residues 175-245 (PGHP…RRDP) and 273-292 (SVQSLGSDPDEYASSGSSLG). The residue at position 186 (Ser186) is a Phosphoserine; by MAPKAPK2. At Ser197 the chain carries Phosphoserine. A P-P-P-P-G repeat occupies 198–202 (PPPPG). Residues 204–216 (AGPSLSSSSFSPS) show a composition bias toward low complexity. Ser218 is modified (phosphoserine). The stretch at 219-223 (PPPPG) is one P-P-P-P-G repeat. A Phosphoserine; by MAPK1; in vitro modification is found at Ser228. 3 positions are modified to phosphoserine: Ser276, Ser296, and Ser323. Residues 312–326 (APRRLPIFNRISVSE) are interaction with CNOT1.

As to quaternary structure, associates with cytoplasmic CCR4-NOT and PAN2-PAN3 deadenylase complexes to trigger ARE-containing mRNA deadenylation and decay processes. Part of a mRNA decay activation complex at least composed of poly(A)-specific exoribonucleases CNOT6, EXOSC2 and XRN1 and mRNA-decapping enzymes DCP1A and DCP2. Associates with the RNA exosome complex. Interacts (via phosphorylated form) with 14-3-3 proteins; these interactions promote exclusion of ZFP36 from cytoplasmic stress granules in response to arsenite treatment in a MAPKAPK2-dependent manner and does not prevent CCR4-NOT deadenylase complex recruitment or ZFP36-induced ARE-containing mRNA deadenylation and decay processes. Interacts with 14-3-3 proteins; these interactions occur in response to rapamycin in an Akt-dependent manner. Interacts with AGO2 and AGO4. Interacts (via C-terminus) with CNOT1; this interaction occurs in a RNA-independent manner and induces mRNA deadenylation. Interacts (via N-terminus) with CNOT6. Interacts with CNOT6L. Interacts (via C-terminus) with CNOT7; this interaction occurs in a RNA-independent manner, induces mRNA deadenylation and is inhibited in a phosphorylation MAPKAPK2-dependent manner. Interacts (via unphosphorylated form) with CNOT8; this interaction occurs in a RNA-independent manner and is inhibited in a phosphorylation MAPKAPK2-dependent manner. Interacts with DCP1A. Interacts (via N-terminus) with DCP2. Interacts with EDC3. Interacts (via N-terminus) with EXOSC2. Interacts with heat shock 70 kDa proteins. Interacts with KHSRP; this interaction increases upon cytokine-induced treatment. Interacts with MAP3K4; this interaction enhances the association with SH3KBP1/CIN85. Interacts with MAPKAPK2; this interaction occurs upon skeletal muscle satellite cell activation. Interacts with NCL. Interacts with NUP214; this interaction increases upon lipopolysaccharide (LPS) stimulation. Interacts with PABPC1; this interaction occurs in a RNA-dependent manner. Interacts (via hypophosphorylated form) with PABPN1 (via RRM domain and C-terminal arginine-rich region); this interaction occurs in the nucleus in a RNA-independent manner, decreases in presence of single-stranded poly(A) RNA-oligomer and in a p38 MAPK-dependent-manner and inhibits nuclear poly(A) tail synthesis. Interacts with PAN2. Interacts (via C3H1-type zinc finger domains) with PKM. Interacts (via C3H1-type zinc finger domains) with nuclear RNA poly(A) polymerase. Interacts with PPP2CA; this interaction occurs in LPS-stimulated cells and induces ZFP36 dephosphorylation, and hence may promote ARE-containing mRNAs decay. Interacts (via C-terminus) with PRR5L (via C-terminus); this interaction may accelerate ZFP36-mediated mRNA decay during stress. Interacts (via C-terminus) with SFN; this interaction occurs in a phosphorylation-dependent manner. Interacts (via extreme C-terminal region) with SH3KBP1/CIN85 (via SH3 domains); this interaction enhances MAP3K4-induced phosphorylation of ZFP36 at Ser-66 and Ser-93 and does not alter neither ZFP36 binding to ARE-containing transcripts nor TNF-alpha mRNA decay. Interacts with XRN1. Interacts (via C-terminus and Ser-186 phosphorylated form) with YWHAB; this interaction occurs in a p38/MAPKAPK2-dependent manner, increases cytoplasmic localization of ZFP36 and protects ZFP36 from Ser-186 dephosphorylation by serine/threonine phosphatase 2A, and hence may be crucial for stabilizing ARE-containing mRNAs. Interacts (via phosphorylated form) with YWHAE. Interacts (via C-terminus) with YWHAG; this interaction occurs in a phosphorylation-dependent manner. Interacts with YWHAH; this interaction occurs in a phosphorylation-dependent manner. Interacts with YWHAQ; this interaction occurs in a phosphorylation-dependent manner. Interacts with (via C-terminus) YWHAZ; this interaction occurs in a phosphorylation-dependent manner. Interacts (via P-P-P-P-G repeats) with GIGYF2; the interaction is direct. In terms of assembly, (Microbial infection) Interacts (via C-terminus) with HTLV-1 TAX (via C-terminus); this interaction inhibits HTLV-1 TAX to transactivate viral long terminal repeat (LTR) promoter. In terms of processing, phosphorylated. Phosphorylation at serine and/or threonine residues occurs in a p38 MAPK- and MAPKAPK2-dependent manner. Phosphorylated by MAPKAPK2 at Ser-60 and Ser-186; phosphorylation increases its stability and cytoplasmic localization, promotes binding to 14-3-3 adapter proteins and inhibits the recruitment of cytoplasmic CCR4-NOT and PAN2-PAN3 deadenylase complexes to the mRNA decay machinery, thereby inhibiting ZFP36-induced ARE-containing mRNA deadenylation and decay processes. Phosphorylation by MAPKAPK2 does not impair ARE-containing RNA-binding. Phosphorylated in a MAPKAPK2- and p38 MAPK-dependent manner upon skeletal muscle satellite cell activation; this phosphorylation inhibits ZFP36-mediated mRNA decay activity, and hence stabilizes MYOD1 mRNA. Phosphorylated by MAPK1 upon mitogen stimulation. Phosphorylated at Ser-66 and Ser-93; these phosphorylations increase in a SH3KBP1-dependent manner. Phosphorylated at serine and threonine residues in a pyruvate kinase PKM- and p38 MAPK-dependent manner. Phosphorylation at Ser-60 may participate in the PKM-mediated degradation of ZFP36 in a p38 MAPK-dependent manner. Dephosphorylated by serine/threonine phosphatase 2A at Ser-186. Ubiquitinated; pyruvate kinase (PKM)-dependent ubiquitination leads to proteasomal degradation through a p38 MAPK signaling pathway. Expressed in both basal and suprabasal epidermal layers. Expressed in epidermal keratinocytes. Expressed strongly in mature dendritic cells. Expressed in immature dendritic cells (at protein level).

The protein resides in the nucleus. It is found in the cytoplasm. Its subcellular location is the cytoplasmic granule. It localises to the P-body. Zinc-finger RNA-binding protein that destabilizes several cytoplasmic AU-rich element (ARE)-containing mRNA transcripts by promoting their poly(A) tail removal or deadenylation, and hence provide a mechanism for attenuating protein synthesis. Acts as an 3'-untranslated region (UTR) ARE mRNA-binding adapter protein to communicate signaling events to the mRNA decay machinery. Recruits deadenylase CNOT7 (and probably the CCR4-NOT complex) via association with CNOT1, and hence promotes ARE-mediated mRNA deadenylation. Functions also by recruiting components of the cytoplasmic RNA decay machinery to the bound ARE-containing mRNAs. Self regulates by destabilizing its own mRNA. Binds to 3'-UTR ARE of numerous mRNAs and of its own mRNA. Plays a role in anti-inflammatory responses; suppresses tumor necrosis factor (TNF)-alpha production by stimulating ARE-mediated TNF-alpha mRNA decay and several other inflammatory ARE-containing mRNAs in interferon (IFN)- and/or lipopolysaccharide (LPS)-induced macrophages. Also plays a role in the regulation of dendritic cell maturation at the post-transcriptional level, and hence operates as part of a negative feedback loop to limit the inflammatory response. Promotes ARE-mediated mRNA decay of hypoxia-inducible factor HIF1A mRNA during the response of endothelial cells to hypoxia. Positively regulates early adipogenesis of preadipocytes by promoting ARE-mediated mRNA decay of immediate early genes (IEGs). Negatively regulates hematopoietic/erythroid cell differentiation by promoting ARE-mediated mRNA decay of the transcription factor STAT5B mRNA. Plays a role in maintaining skeletal muscle satellite cell quiescence by promoting ARE-mediated mRNA decay of the myogenic determination factor MYOD1 mRNA. Associates also with and regulates the expression of non-ARE-containing target mRNAs at the post-transcriptional level, such as MHC class I mRNAs. Participates in association with argonaute RISC catalytic components in the ARE-mediated mRNA decay mechanism; assists microRNA (miRNA) targeting ARE-containing mRNAs. May also play a role in the regulation of cytoplasmic mRNA decapping; enhances decapping of ARE-containing RNAs, in vitro. Involved in the delivery of target ARE-mRNAs to processing bodies (PBs). In addition to its cytosolic mRNA-decay function, affects nuclear pre-mRNA processing. Negatively regulates nuclear poly(A)-binding protein PABPN1-stimulated polyadenylation activity on ARE-containing pre-mRNA during LPS-stimulated macrophages. Also involved in the regulation of stress granule (SG) and P-body (PB) formation and fusion. Plays a role in the regulation of keratinocyte proliferation, differentiation and apoptosis. Plays a role as a tumor suppressor by inhibiting cell proliferation in breast cancer cells. Its function is as follows. (Microbial infection) Negatively regulates HTLV-1 TAX-dependent transactivation of viral long terminal repeat (LTR) promoter. This chain is mRNA decay activator protein ZFP36, found in Homo sapiens (Human).